We begin with the raw amino-acid sequence, 225 residues long: U2 small nuclear ribonucleoprotein B'' (225 aa).

Residues 7 to 86 (HTIYINNMND…KPMRIQYAKT (80 aa)) form the RRM 1 domain. Residues 99-145 (ADKEKKKEKKKAKTVEQTATTTNKKPGQGTPNSANTQGNSTPNPQVP) are disordered. Lys111 is subject to N6-acetyllysine; alternate. Residue Lys111 forms a Glycyl lysine isopeptide (Lys-Gly) (interchain with G-Cter in SUMO2); alternate linkage. The span at 113 to 123 (VEQTATTTNKK) shows a compositional bias: low complexity. The segment covering 127–141 (GTPNSANTQGNSTPN) has biased composition (polar residues). Tyr151 carries the phosphotyrosine modification. In terms of domain architecture, RRM 2 spans 151–225 (YILFLNNLPE…HAMKITYAKK (75 aa)).

Belongs to the RRM U1 A/B'' family. In terms of assembly, identified in the spliceosome B complex. Identified in the spliceosome C complex. Present in a spliceosome complex assembled in vitro, and composed of SNRPB2, HPRP8BP and CRNKL1. Contributes to the binding of stem loop IV of U2 snRNA with SNRPP1.

It localises to the nucleus. Its function is as follows. Involved in pre-mRNA splicing as component of the spliceosome. Associated with sn-RNP U2, where it contributes to the binding of stem loop IV of U2 snRNA. This chain is U2 small nuclear ribonucleoprotein B'' (SNRPB2), found in Homo sapiens (Human).